The following is a 341-amino-acid chain: N-acetyl-gamma-glutamyl-phosphate reductase (341 aa).

The active site involves Cys-148.

Belongs to the NAGSA dehydrogenase family. Type 1 subfamily.

Its subcellular location is the cytoplasm. The catalysed reaction is N-acetyl-L-glutamate 5-semialdehyde + phosphate + NADP(+) = N-acetyl-L-glutamyl 5-phosphate + NADPH + H(+). It participates in amino-acid biosynthesis; L-arginine biosynthesis; N(2)-acetyl-L-ornithine from L-glutamate: step 3/4. Functionally, catalyzes the NADPH-dependent reduction of N-acetyl-5-glutamyl phosphate to yield N-acetyl-L-glutamate 5-semialdehyde. The protein is N-acetyl-gamma-glutamyl-phosphate reductase of Pseudothermotoga lettingae (strain ATCC BAA-301 / DSM 14385 / NBRC 107922 / TMO) (Thermotoga lettingae).